The primary structure comprises 209 residues: Ribosomal RNA large subunit methyltransferase E (209 aa).

Positions 63, 65, 83, 99, and 124 each coordinate S-adenosyl-L-methionine. The active-site Proton acceptor is Lys-164.

Belongs to the class I-like SAM-binding methyltransferase superfamily. RNA methyltransferase RlmE family.

The protein localises to the cytoplasm. The enzyme catalyses uridine(2552) in 23S rRNA + S-adenosyl-L-methionine = 2'-O-methyluridine(2552) in 23S rRNA + S-adenosyl-L-homocysteine + H(+). In terms of biological role, specifically methylates the uridine in position 2552 of 23S rRNA at the 2'-O position of the ribose in the fully assembled 50S ribosomal subunit. The protein is Ribosomal RNA large subunit methyltransferase E of Photobacterium profundum (strain SS9).